The sequence spans 82 residues: Small ribosomal subunit protein bS18 (82 aa).

A disordered region spans residues 1-20 (MSEINQTVTRRPFHRRRKTC).

This sequence belongs to the bacterial ribosomal protein bS18 family. In terms of assembly, part of the 30S ribosomal subunit. Forms a tight heterodimer with protein bS6.

Functionally, binds as a heterodimer with protein bS6 to the central domain of the 16S rRNA, where it helps stabilize the platform of the 30S subunit. The chain is Small ribosomal subunit protein bS18 from Bartonella quintana (strain Toulouse) (Rochalimaea quintana).